We begin with the raw amino-acid sequence, 455 residues long: Gamma-glutamyl phosphate reductase (455 aa).

It belongs to the gamma-glutamyl phosphate reductase family.

The protein resides in the cytoplasm. It carries out the reaction L-glutamate 5-semialdehyde + phosphate + NADP(+) = L-glutamyl 5-phosphate + NADPH + H(+). The protein operates within amino-acid biosynthesis; L-proline biosynthesis; L-glutamate 5-semialdehyde from L-glutamate: step 2/2. In terms of biological role, catalyzes the NADPH-dependent reduction of L-glutamate 5-phosphate into L-glutamate 5-semialdehyde and phosphate. The product spontaneously undergoes cyclization to form 1-pyrroline-5-carboxylate. The sequence is that of Gamma-glutamyl phosphate reductase from Synechococcus sp. (strain JA-2-3B'a(2-13)) (Cyanobacteria bacterium Yellowstone B-Prime).